Reading from the N-terminus, the 630-residue chain is Adagio-like protein 3 (630 aa).

A PAS domain is found at 54–126 (EDEAAAWEGR…PLVDPMVVSE (73 aa)). At Cys102 the chain carries S-4a-FMN cysteine. Residues 220 to 268 (YCCILQLSDEVLAHNILSRLSPRDVASIGSVCTRMHELTKNDHLRKMVC) enclose the F-box domain. Kelch repeat units lie at residues 380 to 430 (SWLV…CTLD), 432 to 483 (SKLV…SVFG), 485 to 537 (TKLF…RLDH), 545 to 597 (GRII…CVVG), and 599 to 629 (TRVL…PDED).

This sequence belongs to the ADAGIO family. Post-translationally, FMN binds covalently to cysteine after exposure to blue light and is reversed in the dark.

It is found in the nucleus. Its pathway is protein modification; protein ubiquitination. In terms of biological role, component of an E3 ubiquitin ligase complex that plays a central role in blue light-dependent circadian cycles. Acts as a blue light photoreceptor, due to the presence of FMN, that mediates light-regulated protein degradation of critical clock components by targeting them to the proteasome complex. The SCF(ADO3) E3 ubiquitin ligase complex is involved in the regulation of circadian clock-dependent processes including transition to flowering time, hypocotyl elongation, cotyledons and leaf movement rhythms. This is Adagio-like protein 3 from Oryza sativa subsp. japonica (Rice).